Consider the following 271-residue polypeptide: 3-methyl-2-oxobutanoate hydroxymethyltransferase (271 aa).

Residues Asp53 and Asp92 each coordinate Mg(2+). 3-methyl-2-oxobutanoate is bound by residues 53-54 (DS), Asp92, and Lys120. Glu122 contributes to the Mg(2+) binding site. Residue Glu189 is the Proton acceptor of the active site.

Belongs to the PanB family. Homodecamer; pentamer of dimers. It depends on Mg(2+) as a cofactor.

It localises to the cytoplasm. It carries out the reaction 3-methyl-2-oxobutanoate + (6R)-5,10-methylene-5,6,7,8-tetrahydrofolate + H2O = 2-dehydropantoate + (6S)-5,6,7,8-tetrahydrofolate. It participates in cofactor biosynthesis; (R)-pantothenate biosynthesis; (R)-pantoate from 3-methyl-2-oxobutanoate: step 1/2. Catalyzes the reversible reaction in which hydroxymethyl group from 5,10-methylenetetrahydrofolate is transferred onto alpha-ketoisovalerate to form ketopantoate. This chain is 3-methyl-2-oxobutanoate hydroxymethyltransferase, found in Burkholderia thailandensis (strain ATCC 700388 / DSM 13276 / CCUG 48851 / CIP 106301 / E264).